The chain runs to 223 residues: Ribose-5-phosphate isomerase A (223 aa).

Substrate-binding positions include 29-32, 82-85, and 95-98; these read TGST, DGAD, and KGGG. Glu104 acts as the Proton acceptor in catalysis. Substrate is bound at residue Lys122.

This sequence belongs to the ribose 5-phosphate isomerase family. As to quaternary structure, homodimer.

The catalysed reaction is aldehydo-D-ribose 5-phosphate = D-ribulose 5-phosphate. It functions in the pathway carbohydrate degradation; pentose phosphate pathway; D-ribose 5-phosphate from D-ribulose 5-phosphate (non-oxidative stage): step 1/1. Functionally, catalyzes the reversible conversion of ribose-5-phosphate to ribulose 5-phosphate. The sequence is that of Ribose-5-phosphate isomerase A from Neisseria meningitidis serogroup C / serotype 2a (strain ATCC 700532 / DSM 15464 / FAM18).